The primary structure comprises 1050 residues: MAAVKKEGGALSEAMSLEGDEWELSKENVQPLRQGRIMSTLQGALAQESACNNTLQQQKRAFEYEIRFYTGNDPLDVWDRYISWTEQNYPQGGKESNMSTLLERAVEALQGEKRYYSDPRFLNLWLKLGRLCNEPLDMYSYLHNQGIGVSLAQFYISWAEEYEARENFRKADAIFQEGIQQKAEPLERLQSQHRQFQARVSRQTLLALEKEEEEEVFESSVPQRSTLAELKSKGKKTARAPIIRVGGALKAPSQNRGLQNPFPQQMQNNSRITVFDENADEASTAELSKPTVQPWIAPPMPRAKENELQAGPWNTGRSLEHRPRGNTASLIAVPAVLPSFTPYVEETARQPVMTPCKIEPSINHILSTRKPGKEEGDPLQRVQSHQQASEEKKEKMMYCKEKIYAGVGEFSFEEIRAEVFRKKLKEQREAELLTSAEKRAEMQKQIEEMEKKLKEIQTTQQERTGDQQEETMPTKETTKLQIASESQKIPGMTLSSSVCQVNCCARETSLAENIWQEQPHSKGPSVPFSIFDEFLLSEKKNKSPPADPPRVLAQRRPLAVLKTSESITSNEDVSPDVCDEFTGIEPLSEDAIITGFRNVTICPNPEDTCDFARAARFVSTPFHEIMSLKDLPSDPERLLPEEDLDVKTSEDQQTACGTIYSQTLSIKKLSPIIEDSREATHSSGFSGSSASVASTSSIKCLQIPEKLELTNETSENPTQSPWCSQYRRQLLKSLPELSASAELCIEDRPMPKLEIEKEIELGNEDYCIKREYLICEDYKLFWVAPRNSAELTVIKVSSQPVPWDFYINLKLKERLNEDFDHFCSCYQYQDGCIVWHQYINCFTLQDLLQHSEYITHEITVLIIYNLLTIVEMLHKAEIVHGDLSPRCLILRNRIHDPYDCNKNNQALKIVDFSYSVDLRVQLDVFTLSGFRTVQILEGQKILANCSSPYQVDLFGIADLAHLLLFKEHLQVFWDGSFWKLSQNISELKDGELWNKFFVRILNANDEATVSVLGELAAEMNGVFDTTFQSHLNKALWKVGKLTSPGALLFQ.

In terms of domain architecture, BUB1 N-terminal spans 62–226; that stretch reads FEYEIRFYTG…FESSVPQRST (165 aa). The short motif at 111-118 is the Nuclear localization signal element; that stretch reads GEKRYYSD. The necessary for interaction with KNL1 stretch occupies residues 152–185; that stretch reads AQFYISWAEEYEARENFRKADAIFQEGIQQKAEP. Residues 224 to 232 carry the D-box motif; the sequence is RSTLAELKS. Residue Lys250 is modified to N6-acetyllysine; by PCAF. Phosphoserine is present on Ser367. The disordered stretch occupies residues 368-393; the sequence is TRKPGKEEGDPLQRVQSHQQASEEKK. Ser435 bears the Phosphoserine mark. Residues 456-480 form a disordered region; sequence IQTTQQERTGDQQEETMPTKETTKL. Ser543, Ser665, and Ser670 each carry phosphoserine. Position 676 is a phosphoserine; by PLK1 (Ser676). At Ser697 the chain carries Phosphoserine. Residues 766-1050 form the Protein kinase domain; the sequence is YCIKREYLIC…LTSPGALLFQ (285 aa). 772–780 provides a ligand contact to ATP; sequence YLICEDYKL. Thr792 carries the post-translational modification Phosphothreonine; by PLK1. An ATP-binding site is contributed by Lys795. The Proton acceptor role is filled by Asp882. Phosphothreonine; by PLK1 is present on Thr1008. At Thr1042 the chain carries Phosphothreonine. Phosphoserine is present on Ser1043.

Belongs to the protein kinase superfamily. Ser/Thr protein kinase family. BUB1 subfamily. In terms of assembly, interacts with CENPE. Interacts with PLK1. Part of a complex containing BUB3, CDC20 and BUB1B. Interacts with anaphase-promoting complex/cyclosome (APC/C). Interacts with KNL1. Interacts with KAT2B. Interacts with RIPK3. Interacts with the closed conformation form of MAD2L1. Proteolytically cleaved by caspase-3 in a cell cycle specific manner. The cleavage might be involved in the durability of the cell cycle delay. Caspase-3 cleavage is associated with abrogation of the mitotic checkpoint. The major site of cleavage is at Asp-610. Post-translationally, acetylation at Lys-250 regulates its degradation and timing in anaphase entry. In terms of processing, ubiquitinated. Degraded by the proteasome. Ubiquitinated by UBR5, promoting disassembly of the mitotic checkpoint complex from the APC/C complex. Sumoylated with SUMO2 and SUMO3. The sumoylation mediates the association with CENPE at the kinetochore. Post-translationally, autophosphorylated in vitro. Intramolecular autophosphorylation is stimulated by CENPE. Phosphorylated during mitosis and hyperphosphorylated in mitotically arrested cells. Phosphorylation at Ser-670 and Ser-1043 occurs at kinetochores upon mitotic entry with dephosphorylation at the onset of anaphase. As to expression, highly expressed in thymus followed by spleen. Preferentially expressed in tissues with a high mitotic index.

The protein localises to the cytoplasm. It is found in the nucleus. Its subcellular location is the chromosome. It localises to the centromere. The protein resides in the kinetochore. The protein localises to the cytoskeleton. It is found in the microtubule organizing center. Its subcellular location is the centrosome. The catalysed reaction is L-seryl-[protein] + ATP = O-phospho-L-seryl-[protein] + ADP + H(+). The enzyme catalyses L-threonyl-[protein] + ATP = O-phospho-L-threonyl-[protein] + ADP + H(+). Its activity is regulated as follows. Kinase activity stimulated by CENPE. Its function is as follows. Essential component of the mitotic checkpoint. Required for normal mitosis progression. The mitotic checkpoint delays anaphase until all chromosomes are properly attached to the mitotic spindle. One of its checkpoint functions is to inhibit the activity of the anaphase-promoting complex/cyclosome (APC/C) by blocking the binding of CDC20 to APC/C, independently of its kinase activity. The other is to monitor kinetochore activities that depend on the kinetochore motor CENPE. Required for kinetochore localization of CENPE. Negatively regulates PLK1 activity in interphase cells and suppresses centrosome amplification. Also implicated in triggering apoptosis in polyploid cells that exit aberrantly from mitotic arrest. May play a role for tumor suppression. In Homo sapiens (Human), this protein is Mitotic checkpoint serine/threonine-protein kinase BUB1 beta (BUB1B).